The primary structure comprises 156 residues: Small ribosomal subunit protein uS7 (156 aa).

Belongs to the universal ribosomal protein uS7 family. In terms of assembly, part of the 30S ribosomal subunit. Contacts proteins S9 and S11.

Functionally, one of the primary rRNA binding proteins, it binds directly to 16S rRNA where it nucleates assembly of the head domain of the 30S subunit. Is located at the subunit interface close to the decoding center, probably blocks exit of the E-site tRNA. The sequence is that of Small ribosomal subunit protein uS7 from Nitratidesulfovibrio vulgaris (strain ATCC 29579 / DSM 644 / CCUG 34227 / NCIMB 8303 / VKM B-1760 / Hildenborough) (Desulfovibrio vulgaris).